The sequence spans 100 residues: Large ribosomal subunit protein uL23 (100 aa).

It belongs to the universal ribosomal protein uL23 family. Part of the 50S ribosomal subunit. Contacts protein L29, and trigger factor when it is bound to the ribosome.

In terms of biological role, one of the early assembly proteins it binds 23S rRNA. One of the proteins that surrounds the polypeptide exit tunnel on the outside of the ribosome. Forms the main docking site for trigger factor binding to the ribosome. In Proteus mirabilis (strain HI4320), this protein is Large ribosomal subunit protein uL23.